The chain runs to 201 residues: MRTFTWRKGSLSKVNTCYVLAGGKSKRFGEDKLLYEIKGKKVIERVYETAKSVFKEVYIVAKDREKFSFLNAPVVLDEFEESASIIGLYTALKHAKEENVFVLSGDLPLMKKETVLYVLENFKEPVSVAKTEKLHTLVGVYSKKLLEKIEERIKKGDYRIWALLKDVGYNEVEIPEELRYTLLNMNTKEDLKRILAIENHY.

Residues 20–22 (LAG), lysine 32, aspartate 77, and aspartate 106 each bind GTP. Mg(2+) is bound at residue aspartate 106.

This sequence belongs to the MobA family. Requires Mg(2+) as cofactor.

The protein resides in the cytoplasm. It catalyses the reaction Mo-molybdopterin + GTP + H(+) = Mo-molybdopterin guanine dinucleotide + diphosphate. Its function is as follows. Transfers a GMP moiety from GTP to Mo-molybdopterin (Mo-MPT) cofactor (Moco or molybdenum cofactor) to form Mo-molybdopterin guanine dinucleotide (Mo-MGD) cofactor. In Aquifex aeolicus (strain VF5), this protein is Probable molybdenum cofactor guanylyltransferase.